Reading from the N-terminus, the 669-residue chain is MTESLIMNNISKYNISPQFNSDRIYNDPSLMDDEFSDNEYDLSPKDDVPSPSKRGRGQIQNGIRRSPNKWTEEEDQKLFQLVSIYGEKKWKRISAEMGGQKTGAQCAQHWKRVLSPDIRKGPWDEDEEELLLRLVNQHGSSWKKIAKRICKRTDIQCRYQYLKSLQSREVAWVPKEDEVLVKKVDEMGENLSWLEVSEYLAKLKHTNTLRTALECKTRYLQLTGKGGSILPPLNQSNVSSLNSSSANTFNQQLQYQQQQQQQQQQQQQQQQQQQQQMNNNYNNNYNNNNNNINNNYNNNHNNQNNNNNNNHNHYNNHYNQMNNNNNNNHYNNNNNNNNNINNNNNNNMYQMNNNNSNSNNNNKSHNLSPLSSIIDSNTSSPSFEGCEDNNNNNNNNNNNNNNNNNNNNNNNNSNNTPPNIFRPLPHKPVVTGLTSPTSSPIPSSPPLTPPTSLTLPSSTLSSPSCNNSIRQPSPSPSIKTFKSTIVSTPSRPSPSSSTNSAFSINNIIDSENNNNNNNNDNDNIKVEDNGCNEPVMKKVRSNGEFYYQPIKNKLNNNNNNNNNNNNNNNNNNNNNNNNNNNNGNNTLSYNSDNSSDDDMLPKLKNNKQILSNFKNHNNNQSNTSPMSSPISSPHQSSIEKLKATSFDFFKLESLATLASQSQIVNELVN.

Residues 27 to 69 (DPSLMDDEFSDNEYDLSPKDDVPSPSKRGRGQIQNGIRRSPNK) are disordered. Over residues 30-40 (LMDDEFSDNEY) the composition is skewed to acidic residues. 2 HTH myb-type domains span residues 60-118 (QNGI…SPDI) and 119-170 (RKGP…SREV). 2 consecutive DNA-binding regions (H-T-H motif) follow at residues 90 to 114 (WKRI…KRVL) and 142 to 166 (WKKI…KSLQ). The region spanning 172–223 (WVPKEDEVLVKKVDEMGENLSWLEVSEYLAKLKHTNTLRTALECKTRYLQLT) is the Myb-like domain. Disordered regions lie at residues 226 to 530 (GGSI…EDNG) and 550 to 636 (IKNK…PHQS). 3 stretches are compositionally biased toward low complexity: residues 234 to 382 (NQSN…SSPS), 389 to 415 (NNNN…NSNN), and 450 to 464 (PTSL…SSPS). Positions 465–482 (CNNSIRQPSPSPSIKTFK) are enriched in polar residues. Low complexity-rich tracts occupy residues 483 to 521 (STIV…NNDN), 555 to 593 (NNNN…NSDN), and 611 to 636 (SNFK…PHQS).

The protein localises to the nucleus. This is Myb-like protein M (mybM) from Dictyostelium discoideum (Social amoeba).